A 158-amino-acid chain; its full sequence is Peptide deformylase (158 aa).

Residues cysteine 88 and histidine 130 each coordinate Fe cation. The active site involves glutamate 131. Histidine 134 lines the Fe cation pocket.

It belongs to the polypeptide deformylase family. It depends on Fe(2+) as a cofactor.

It carries out the reaction N-terminal N-formyl-L-methionyl-[peptide] + H2O = N-terminal L-methionyl-[peptide] + formate. Removes the formyl group from the N-terminal Met of newly synthesized proteins. Requires at least a dipeptide for an efficient rate of reaction. N-terminal L-methionine is a prerequisite for activity but the enzyme has broad specificity at other positions. In Agathobacter rectalis (strain ATCC 33656 / DSM 3377 / JCM 17463 / KCTC 5835 / VPI 0990) (Eubacterium rectale), this protein is Peptide deformylase.